The primary structure comprises 223 residues: Endonuclease III (223 aa).

In terms of domain architecture, HhH spans 118–137; sequence RDFLTAIEGIGDKTADVVLL. [4Fe-4S] cluster is bound by residues Cys198, Cys205, Cys208, and Cys214.

Belongs to the Nth/MutY family. [4Fe-4S] cluster is required as a cofactor.

It carries out the reaction 2'-deoxyribonucleotide-(2'-deoxyribose 5'-phosphate)-2'-deoxyribonucleotide-DNA = a 3'-end 2'-deoxyribonucleotide-(2,3-dehydro-2,3-deoxyribose 5'-phosphate)-DNA + a 5'-end 5'-phospho-2'-deoxyribonucleoside-DNA + H(+). Functionally, probably part of a 4-gene DNA damage response locus in which the upstream ups system, in combination with this downstream locus, functions in homologous recombination to rescue Sulfolobales from DNA-damaging threats. DNA repair enzyme that has both DNA N-glycosylase activity and AP-lyase activity. The DNA N-glycosylase activity releases various damaged pyrimidines from DNA by cleaving the N-glycosidic bond, leaving an AP (apurinic/apyrimidinic) site. The AP-lyase activity cleaves the phosphodiester bond 3' to the AP site by a beta-elimination, leaving a 3'-terminal unsaturated sugar and a product with a terminal 5'-phosphate. Nicks UV-treated plasmid DNA in a dose-dependent manner, has no activity on untreated DNA. This is Endonuclease III from Sulfolobus acidocaldarius (strain ATCC 33909 / DSM 639 / JCM 8929 / NBRC 15157 / NCIMB 11770).